A 228-amino-acid chain; its full sequence is Cytidylate kinase (228 aa).

17–25 (GPTASGKGT) serves as a coordination point for ATP.

Belongs to the cytidylate kinase family. Type 1 subfamily.

It localises to the cytoplasm. The enzyme catalyses CMP + ATP = CDP + ADP. It catalyses the reaction dCMP + ATP = dCDP + ADP. This chain is Cytidylate kinase, found in Burkholderia pseudomallei (strain 1106a).